Consider the following 3933-residue polypeptide: Circularly permutated Ras protein 2 (3933 aa).

Positions 12–46 form a coiled coil; sequence VHEVKKQELESILLQQEQEKQAKEEKESIKDTDDK. Disordered stretches follow at residues 23-101, 136-189, 1022-1054, and 2817-2839; these read ILLQ…IEKK, DIRE…RKET, ITTT…TTTT, and NNNN…RPTR. Over residues 28-62 the composition is skewed to basic and acidic residues; it reads EQEKQAKEEKESIKDTDDKPIEDTEHSTNNDKPIE. A compositionally biased stretch (low complexity) spans 70 to 92; it reads TPTTTTTTKPTDEASSSSNNNNN. A compositionally biased stretch (basic and acidic residues) spans 136-145; sequence DIREPTDKPF. Polar residues predominate over residues 146–156; sequence ENTSNIETTRQ. Positions 167-215 form a coiled coil; sequence KTEAERLEQEQKQKQYDENRKETDRKLELELERLKNKKEEVEQIRAYFQ. Basic and acidic residues predominate over residues 168–189; that stretch reads TEAERLEQEQKQKQYDENRKET. The segment covering 2817–2826 has biased composition (low complexity); it reads NNNNNNNRYN. GTP is bound by residues 2853–2857, 2913–2916, and 2976–2983; these read DTAGQ, TKAD, and GDGGIGKS. Disordered stretches follow at residues 3036 to 3086, 3107 to 3142, and 3733 to 3754; these read LQSA…LSSR, RKSS…QDYE, and VIEP…PSSS. Positions 3070 to 3086 are enriched in low complexity; sequence PSSSSTRTSVSTSLSSR. A compositionally biased stretch (basic and acidic residues) spans 3107–3120; the sequence is RKSSLVEEESKRQY. A compositionally biased stretch (acidic residues) spans 3121–3141; the sequence is DDDDESKSESSEYDDDDDQDY.

It belongs to the small GTPase superfamily. CpRas family.

The chain is Circularly permutated Ras protein 2 (cpras2) from Dictyostelium discoideum (Social amoeba).